We begin with the raw amino-acid sequence, 433 residues long: ATP-dependent RNA helicase SUB2 (433 aa).

The Q motif motif lies at threonine 49–glutamine 77. The Helicase ATP-binding domain occupies isoleucine 80–isoleucine 255. Alanine 93–threonine 100 is a binding site for ATP. The DEAD box motif lies at aspartate 202–aspartate 205. Positions glycine 267–serine 428 constitute a Helicase C-terminal domain.

Belongs to the DEAD box helicase family. DECD subfamily.

Its subcellular location is the nucleus. The catalysed reaction is ATP + H2O = ADP + phosphate + H(+). Functionally, ATP-binding RNA helicase involved in transcription elongation and required for the export of mRNA out of the nucleus. SUB2 also plays a role in pre-mRNA splicing and spliceosome assembly. May be involved in rDNA and telomeric silencing, and maintenance of genome integrity. This chain is ATP-dependent RNA helicase SUB2 (SUB2), found in Scheffersomyces stipitis (strain ATCC 58785 / CBS 6054 / NBRC 10063 / NRRL Y-11545) (Yeast).